The following is a 540-amino-acid chain: Chaperonin GroEL (540 aa).

Residues 30–33 (TLGP), lysine 51, 87–91 (DGTTT), glycine 415, and aspartate 495 contribute to the ATP site.

It belongs to the chaperonin (HSP60) family. As to quaternary structure, forms a cylinder of 14 subunits composed of two heptameric rings stacked back-to-back. Interacts with the co-chaperonin GroES.

It localises to the cytoplasm. It carries out the reaction ATP + H2O + a folded polypeptide = ADP + phosphate + an unfolded polypeptide.. Together with its co-chaperonin GroES, plays an essential role in assisting protein folding. The GroEL-GroES system forms a nano-cage that allows encapsulation of the non-native substrate proteins and provides a physical environment optimized to promote and accelerate protein folding. This is Chaperonin GroEL from Erwinia aphidicola.